Here is a 430-residue protein sequence, read N- to C-terminus: Enolase (430 aa).

Gln-163 serves as a coordination point for (2R)-2-phosphoglycerate. The active-site Proton donor is the Glu-205. Mg(2+) is bound by residues Asp-242, Glu-286, and Asp-313. (2R)-2-phosphoglycerate contacts are provided by Lys-338, Arg-367, Ser-368, and Lys-389. Catalysis depends on Lys-338, which acts as the Proton acceptor.

It belongs to the enolase family. It depends on Mg(2+) as a cofactor.

The protein localises to the cytoplasm. The protein resides in the secreted. It localises to the cell surface. It carries out the reaction (2R)-2-phosphoglycerate = phosphoenolpyruvate + H2O. It participates in carbohydrate degradation; glycolysis; pyruvate from D-glyceraldehyde 3-phosphate: step 4/5. In terms of biological role, catalyzes the reversible conversion of 2-phosphoglycerate (2-PG) into phosphoenolpyruvate (PEP). It is essential for the degradation of carbohydrates via glycolysis. The protein is Enolase of Symbiobacterium thermophilum (strain DSM 24528 / JCM 14929 / IAM 14863 / T).